The sequence spans 338 residues: Mitochondrial glutathione transporter SLC25A40 (338 aa).

Solcar repeat units lie at residues 13 to 131 (VTPL…LTAL), 139 to 223 (NESR…LKKW), and 233 to 327 (PTFM…GKSF). 6 helical membrane passes run 19–39 (MFAS…FDVV), 103–123 (LWSG…IYFT), 145–165 (IVAG…LELI), 199–220 (WAPT…YEVL), 239–259 (FTSG…FDVV), and 298–318 (GLFT…AVMI).

Belongs to the mitochondrial carrier (TC 2.A.29) family.

The protein localises to the mitochondrion inner membrane. It catalyses the reaction glutathione(in) = glutathione(out). In terms of biological role, probable mitochondrial transporter required for glutathione import into mitochondria. Glutathione, which plays key roles in oxidative metabolism, is produced exclusively in the cytosol and is imported in many organelles. Mitochondrial glutathione is required for the activity and stability of proteins containing iron-sulfur clusters, as well as erythropoiesis. The protein is Mitochondrial glutathione transporter SLC25A40 of Bos taurus (Bovine).